We begin with the raw amino-acid sequence, 121 residues long: Holin-like protein CidA (121 aa).

Transmembrane regions (helical) follow at residues 27–47 (VHLP…SLKF), 58–78 (GADF…VAVI), and 89–109 (IDLI…TGIL).

The protein belongs to the CidA/LrgA family. CidA subfamily.

It is found in the cell membrane. Functionally, increases the activity of extracellular murein hydrolases possibly by mediating their export via hole formation. Inhibited by the antiholin-like proteins LrgAB. In an unstressed cell, the LrgAB products probably inhibit the function of the CidA protein. When a cell is stressed by the addition of antibiotics or by other factors in the environment, CidA possibly oligomerizes within the bacterial cell membrane, creating lesions that disrupt the proton motive force, which in turn results in loss of cell viability. These lesions are also hypothesized to regulate the subsequent cell lysis by either allowing the murein hydrolases access to the cell wall substrate and/or regulating their activity by a possible change in the cell wall pH that results from loss of membrane potential. The polypeptide is Holin-like protein CidA (Bacillus cytotoxicus (strain DSM 22905 / CIP 110041 / 391-98 / NVH 391-98)).